A 3838-amino-acid chain; its full sequence is Replicase polyprotein 1ab (3838 aa).

The C4-type; atypical zinc-finger motif lies at 8-28; sequence CMCTPAARVFWNAGQVFCTRC. Positions 69–180 constitute a Peptidase C31 domain; sequence ECTPSGCCWL…QPFCPFEEAH (112 aa). The tract at residues 69 to 182 is PCP1-alpha; that stretch reads ECTPSGCCWL…FCPFEEAHSD (114 aa). Residues cysteine 76 and histidine 146 each act as for Nsp1-alpha papain-like cysteine proteinase activity in the active site. The interval 203-204 is important for host EIF2AK2 inhibition; sequence MM. The segment at 269–384 is PCP1-beta; it reads PNVFDGKCWL…IFRFGAHKWY (116 aa). One can recognise a Peptidase C32 domain in the interval 269–385; it reads PNVFDGKCWL…FRFGAHKWYG (117 aa). Active-site for Nsp1-beta papain-like cysteine proteinase activity residues include cysteine 276 and histidine 345. Positions 418-505 are OTU-like; that stretch reads ITTYSPPTDG…GVHWEVEVRS (88 aa). In terms of domain architecture, Peptidase C33 spans 420-527; sequence TYSPPTDGSC…VGVCSEGCVA (108 aa). Residues cysteine 429 and histidine 498 each act as for Nsp2 cysteine proteinase activity in the active site. 2 disordered regions span residues 728 to 758 and 1027 to 1064; these read AIGS…SHPA and SVTP…SHAS. The span at 737-749 shows a compositional bias: basic and acidic residues; the sequence is DSKRENMHNSRED. The next 5 membrane-spanning stretches (helical) occupy residues 1094–1114, 1117–1137, 1162–1182, 1211–1231, and 1235–1255; these read LMTW…TLFS, GSMA…LLLC, GVFG…SNPV, GLVV…LGGS, and WHVI…VYVV. The tract at residues 1132–1255 is HD1; the sequence is LALLLCRSYP…DLALSLVYVV (124 aa). Residues 1310–1334 form a WCCH region; sequence TGWRGCWRGESPIHQPHQKPIAYAN. The next 4 helical transmembrane spans lie at 1450 to 1470, 1526 to 1546, 1556 to 1576, and 1592 to 1612; these read TLAV…GLWF, EVGI…RLAL, AFCA…PILL, and FLVF…GLLW. The tract at residues 1451 to 1612 is HD2; sequence LAVAQVSVWT…LSLGITGLLW (162 aa). The region spanning 1677–1879 is the Peptidase S32 domain; it reads GAFRTHKPCL…SLLASVPVME (203 aa). Residues histidine 1715, aspartate 1740, and serine 1793 each act as charge relay system; for 3C-like serine proteinase activity in the active site. A run of 5 helical transmembrane segments spans residues 1875–1895, 1916–1936, 1960–1980, 2003–2023, and 2029–2048; these read VPVM…FLLW, ILPA…LAWA, LAFY…AFAG, SYVP…LWLF, and HNML…RYFA. An HD3 region spans residues 1902–2023; that stretch reads WTPIVAVGFF…HALGVILWLF (122 aa). The region spanning 2364 to 2527 is the NiRAN domain; sequence IISQLQGLTT…LPYKLYPVRG (164 aa). Positions 2765–2899 constitute a RdRp catalytic domain; the sequence is AGRCLEADLA…LYAERPTFPN (135 aa). One can recognise an AV ZBD domain in the interval 3021–3084; that stretch reads GKKFRHCGIC…SPVGAGRSPL (64 aa). Positions 3027, 3030, 3040, 3045, 3048, 3050, 3052, 3054, 3061, 3063, 3070, and 3073 each coordinate Zn(2+). In terms of domain architecture, (+)RNA virus helicase ATP-binding spans 3134-3293; the sequence is DLPDGDYQVV…VFDQMPQKQL (160 aa). 3168–3175 provides a ligand contact to ATP; sequence VGPPGSGK. The (+)RNA virus helicase C-terminal domain maps to 3294–3423; it reads TTIYRFGPNI…FSRGDDLVVL (130 aa). The AV-Nsp11N/CoV-Nsp15M domain occupies 3462–3559; the sequence is EGSCMPLPQV…LTLYIRGEPQ (98 aa). The 123-residue stretch at 3561 to 3683 folds into the NendoU domain; the sequence is LPETLVSTGR…MVWKGATAYF (123 aa). Residues histidine 3592, histidine 3607, and lysine 3636 contribute to the active site.

The protein belongs to the arteriviridae polyprotein family. As to quaternary structure, nsp1-alpha papain-like: Interacts with host RNF31. In terms of assembly, interacts with host EIF2AK2; this interaction occurs in host stress granules and leads to EIF2AK2 inhibition. Interacts with host G3BP1; this interaction probably plays a role in Nsp1-beta-mediated inhibition of host EIF2AK2. Interacts with host DDX18; this interaction redistributes host DDX18 to the cytoplasm. As to quaternary structure, interacts with host IFITM1. In terms of assembly, interacts with host DDX5. Interacts with host OTULIN. As to quaternary structure, interacts with host LGALS3. In terms of processing, specific enzymatic cleavages in vivo by its own proteases yield mature proteins. Nsp1 is autocleaved into two subunits, Nsp1-alpha and Nsp1-beta. There are two alternative pathways for processing. Either nsp4-5 is cleaved, which represents the major pathway or the nsp5-6 and nsp6-7 are processed, which represents the minor pathway. The major pathway occurs when nsp2 acts as a cofactor for nsp4.

It is found in the host nucleus. The protein resides in the host cytoplasm. Its subcellular location is the host membrane. The protein localises to the host endoplasmic reticulum. It localises to the host perinuclear region. The catalysed reaction is RNA(n) + a ribonucleoside 5'-triphosphate = RNA(n+1) + diphosphate. It catalyses the reaction ATP + H2O = ADP + phosphate + H(+). It carries out the reaction Thiol-dependent hydrolysis of ester, thioester, amide, peptide and isopeptide bonds formed by the C-terminal Gly of ubiquitin (a 76-residue protein attached to proteins as an intracellular targeting signal).. The enzyme catalyses uridylyl-uridylyl-ribonucleotide-RNA = a 3'-end uridylyl-2',3'-cyclophospho-uridine-RNA + a 5'-end dephospho-ribonucleoside-RNA. Contains the activities necessary for the transcription of negative stranded RNA, leader RNA, subgenomic mRNAs and progeny virion RNA as well as proteinases responsible for the cleavage of the polyprotein into functional products. Its function is as follows. Inhibits host IFN-beta production. Plays a role in the degradation of the host transcriptional activator CREBBP protein. The degradation of host CREBBP which is a key component of the IFN enhanceosome is likely responsible for the inhibition of interferon mediated by Nsp1-alpha. Also participates in the inhibition of host NF-kappa-B activation by counteracting LUBAC-dependent induction of NF-kappa-B. Reduces host NEMO ubiquitination by blocking the interaction between the two LUBAC complex components RNF31 and SHARPIN. Functionally, plays a role in blocking host mRNA nuclear export to the cytoplasm and subversion of host protein synthesis. Additionally, inhibits the interferon-activated JAK/STAT signal transduction by mediating the ubiquitination and subsequent proteasomal degradation of host KPNA1. Repurposes the host antiviral stress granules into a proviral platform to counteract the EIF2AK2/PKR restriction, thereby regulating the host inflammatory response. In terms of biological role, multifunctional protein that acts as a viral protease and as a viral antagonist of host immune response. Cleaves the nsp2/nsp3 site in the viral polyprotein. Displays deubiquitinating activity that cleaves both ubiquitinated and ISGylated products and therefore inhibits ubiquitin and ISG15-dependent host innate immunity. Also deubiquinates host NFKBIA, thereby interfering with NFKBIA degradation and impairing subsequent NF-kappa-B activation. Plays a role in the inhibition of the immune response by interacting with host IFITM1. This interaction leads to the proteasomal degradation of the IFN-induced antiviral protein IFITM1. Its function is as follows. Cleaves the majority of cleavage sites present in the C-terminus of the polyprotein. Triggers host apoptosis through caspase-3, -8, and -9 activations. Subverts host innate immune responses through its protease activity. Targets the NF-kappa-B essential modulator NEMO and mediates its cleavage. Blocks host interferon beta induction and downstream signaling by cleaving mitochondrial MAVS, dislodging it from the mitochondria. Impairs host defense by cleaving host mRNA-decapping enzyme DCP1A to attenuate its antiviral activity. Functionally, plays a role in the initial induction of autophagosomes from host endoplasmic reticulum. In terms of biological role, plays a role in the inhibition of host STAT3 signaling pathway by inducing the degradation of STAT3. Responsible for replication and transcription of the viral RNA genome. Its function is as follows. Displays RNA and DNA duplex-unwinding activities with 5' to 3' polarity. Functionally, plays a role in viral transcription/replication and prevents the simultaneous activation of host cell dsRNA sensors, such as MDA5/IFIH1, OAS, PKR and NLRP3 inflammasome. Acts by degrading the 5'-polyuridines generated during replication of the poly(A) region of viral genomic and subgenomic RNAs. Catalyzes a two-step reaction in which a 2'3'-cyclic phosphate (2'3'-cP) is first generated by 2'-O transesterification, which is then hydrolyzed to a 3'-phosphate (3'-P). If not degraded, poly(U) RNA would hybridize with poly(A) RNA tails and activate host dsRNA sensors. Also plays a role in the inhibition of host type I interferon production by recruiting host OTULIN to promote removal of linear ubiquitination targeting host NEMO. The polypeptide is Replicase polyprotein 1ab (Sus scrofa (Pig)).